A 73-amino-acid polypeptide reads, in one-letter code: MNNRKYSINNGFMSYLRKKFTTFLRKKSTYRIKSNTDYYQENEKLIHKNNIKIPYKVKVIRKRCSSSDDDVFI.

This is an uncharacterized protein from Swinepox virus (strain Kasza) (SWPV).